The chain runs to 803 residues: Ribonuclease II, chloroplastic/mitochondrial (803 aa).

The N-terminal 35 residues, 1-35 (MMSVRAINGCSIIRTATSAGGPPVSLFRHRIQRLR), are a transit peptide targeting the chloroplast and mitochondrion. The RNB domain maps to 399–694 (RIDLTHLKVY…AHYQIKAFLR (296 aa)).

It belongs to the RNR ribonuclease family. Expressed in seedlings, roots, leaves and flowers.

Its subcellular location is the mitochondrion. The protein localises to the plastid. It is found in the chloroplast. The enzyme catalyses Exonucleolytic cleavage in the 3'- to 5'-direction to yield nucleoside 5'-phosphates.. Its function is as follows. 3'-5' exoribonuclease that catalyzes 3' maturation of chloroplast and mitochondrion ribosomal RNAs; degrades short nucleotidic extensions to generate the mature 3'-ends. Involved in the maturation of 23S, 16S and 5S rRNAs. This chain is Ribonuclease II, chloroplastic/mitochondrial (RNR1), found in Arabidopsis thaliana (Mouse-ear cress).